Reading from the N-terminus, the 356-residue chain is A-type ATP synthase subunit C (356 aa).

Belongs to the V-ATPase V0D/AC39 subunit family. Has multiple subunits with at least A(3), B(3), C, D, E, F, H, I and proteolipid K(x).

The protein resides in the cell membrane. Component of the A-type ATP synthase that produces ATP from ADP in the presence of a proton gradient across the membrane. The polypeptide is A-type ATP synthase subunit C (Thermoplasma acidophilum (strain ATCC 25905 / DSM 1728 / JCM 9062 / NBRC 15155 / AMRC-C165)).